A 113-amino-acid chain; its full sequence is TYRO protein tyrosine kinase-binding protein (113 aa).

The first 21 residues, 1-21, serve as a signal peptide directing secretion; it reads MGGLEPCSRLLLLPLLLAVSG. The Extracellular segment spans residues 22–40; that stretch reads LRPVQAQAQSDCSCSTVSP. Residues 41–61 form a helical membrane-spanning segment; that stretch reads GVLAGIVMGDLVLTVLIALAV. Residue Asp-50 participates in Ca(2+) binding. At 62–113 the chain is on the cytoplasmic side; that stretch reads YFLGRLVPRGRGAAEAATRKQRITETESPYQELQGQRSDVYSDLNTQRPYYK. The disordered stretch occupies residues 75–113; the sequence is AEAATRKQRITETESPYQELQGQRSDVYSDLNTQRPYYK. The region spanning 80–108 is the ITAM domain; sequence RKQRITETESPYQELQGQRSDVYSDLNTQ. A compositionally biased stretch (polar residues) spans 87 to 113; it reads TESPYQELQGQRSDVYSDLNTQRPYYK. Residues Tyr-91 and Tyr-102 each carry the phosphotyrosine modification.

The protein belongs to the TYROBP family. Homodimer; disulfide-linked. Homotrimer; disulfide-linked. Homotetramer; disulfide-linked. Homotrimers and homotetramers form when low levels of partner receptors are available and are competitive with assembly with interacting receptors. They may represent alternative oligomerization states or may be intermediates in the receptor assembly process. Binding of a metal cation aids in homooligomerization through coordination of the metal ion by the subunits of the oligomer. Interacts with TREM1. Interacts with TREM2. Interacts with SIRPB1. Interacts with CLECSF5. Interacts with SIGLEC14. Interacts with CD300LB and CD300E. Interacts with CD300C2. Interacts (via ITAM domain) with SYK (via SH2 domains); activates SYK mediating neutrophil and macrophage integrin-mediated activation. Interacts with KLRC2, KIR2DS3 and KIR2DS5. Interacts with CD300H. Interacts with KIR2DS1. Interacts with KLRD1. Interacts with SIGLEC1. Post-translationally, following ligand binding by associated receptors, tyrosine phosphorylated in the ITAM domain which leads to activation of additional tyrosine kinases and subsequent cell activation. In terms of tissue distribution, expressed at low levels in the early development of the hematopoietic system and in the promonocytic stage and at high levels in mature monocytes. Expressed in hematological cells and tissues such as peripheral blood leukocytes and spleen. Also found in bone marrow, lymph nodes, placenta, lung and liver. Expressed at lower levels in different parts of the brain especially in the basal ganglia and corpus callosum.

The protein resides in the cell membrane. Adapter protein which non-covalently associates with activating receptors found on the surface of a variety of immune cells to mediate signaling and cell activation following ligand binding by the receptors. TYROBP is tyrosine-phosphorylated in the ITAM domain following ligand binding by the associated receptors which leads to activation of additional tyrosine kinases and subsequent cell activation. Also has an inhibitory role in some cells. Non-covalently associates with activating receptors of the CD300 family to mediate cell activation. Also mediates cell activation through association with activating receptors of the CD200R family. Required for neutrophil activation mediated by integrin. Required for the activation of myeloid cells mediated by the CLEC5A/MDL1 receptor. Associates with natural killer (NK) cell receptors such as KIR2DS2 and the KLRD1/KLRC2 heterodimer to mediate NK cell activation. Also enhances trafficking and cell surface expression of NK cell receptors KIR2DS1, KIR2DS2 and KIR2DS4 and ensures their stability at the cell surface. Associates with SIRPB1 to mediate activation of myeloid cells such as monocytes and dendritic cells. Associates with TREM1 to mediate activation of neutrophils and monocytes. Associates with TREM2 on monocyte-derived dendritic cells to mediate up-regulation of chemokine receptor CCR7 and dendritic cell maturation and survival. Association with TREM2 mediates cytokine-induced formation of multinucleated giant cells which are formed by the fusion of macrophages. Stabilizes the TREM2 C-terminal fragment (TREM2-CTF) produced by TREM2 ectodomain shedding which suppresses the release of pro-inflammatory cytokines. In microglia, required with TREM2 for phagocytosis of apoptotic neurons. Required with ITGAM/CD11B in microglia to control production of microglial superoxide ions which promote the neuronal apoptosis that occurs during brain development. Promotes pro-inflammatory responses in microglia following nerve injury which accelerates degeneration of injured neurons. Positively regulates the expression of the IRAK3/IRAK-M kinase and IL10 production by liver dendritic cells and inhibits their T cell allostimulatory ability. Negatively regulates B cell proliferation. Required for CSF1-mediated osteoclast cytoskeletal organization. Positively regulates multinucleation during osteoclast development. This chain is TYRO protein tyrosine kinase-binding protein, found in Homo sapiens (Human).